Here is a 410-residue protein sequence, read N- to C-terminus: Arginine deiminase (410 aa).

Catalysis depends on Cys400, which acts as the Amidino-cysteine intermediate.

Belongs to the arginine deiminase family.

The protein resides in the cytoplasm. The enzyme catalyses L-arginine + H2O = L-citrulline + NH4(+). It functions in the pathway amino-acid degradation; L-arginine degradation via ADI pathway; carbamoyl phosphate from L-arginine: step 1/2. The protein is Arginine deiminase of Streptococcus agalactiae serotype III (strain NEM316).